Consider the following 338-residue polypeptide: MIEVRSVTKRFGKGSRSVEVLHDIDFSVGTGQIAAVIGQSGAGKTTLSRIISLLERPSEGRILLDGTDVSGLSERRLRDQRRAIGTIFQASSLLARRTAAENVALPLEFAGVGRSERRARVAELLGRVGLSDKADLYPRQLSGGQRQRVGIARSLALAPKVLVSDEATSGLDPNTTRSILALLRELRDDLGLTIVLITHEMDVVRQVADVVTVLDAGRVVESGPVIELLRDPHSELGVGLLPDRSHITAEDRDVLWHVTYGSDTVPTNWIELLGKATGRSIGVLSGTVESVGGRPAGRVTISVAGEHPSVGDLLSSWGLHGTRVDDDASARTTEEAAA.

The region spanning 2 to 241 (IEVRSVTKRF…PHSELGVGLL (240 aa)) is the ABC transporter domain. 38-45 (GQSGAGKT) lines the ATP pocket.

It belongs to the ABC transporter superfamily. Methionine importer (TC 3.A.1.24) family. As to quaternary structure, the complex is composed of two ATP-binding proteins (MetN), two transmembrane proteins (MetI) and a solute-binding protein (MetQ).

Its subcellular location is the cell membrane. It catalyses the reaction L-methionine(out) + ATP + H2O = L-methionine(in) + ADP + phosphate + H(+). The catalysed reaction is D-methionine(out) + ATP + H2O = D-methionine(in) + ADP + phosphate + H(+). In terms of biological role, part of the ABC transporter complex MetNIQ involved in methionine import. Responsible for energy coupling to the transport system. This chain is Methionine import ATP-binding protein MetN 1, found in Rhodococcus jostii (strain RHA1).